We begin with the raw amino-acid sequence, 597 residues long: Aspartate--tRNA(Asp/Asn) ligase (597 aa).

Residue Glu-182 coordinates L-aspartate. The tract at residues 206–209 (QLFK) is aspartate. Residue Arg-228 coordinates L-aspartate. ATP-binding positions include 228–230 (RDE) and Gln-237. His-455 serves as a coordination point for L-aspartate. Residue Glu-489 participates in ATP binding. Arg-496 provides a ligand contact to L-aspartate. Residue 541–544 (GFDR) coordinates ATP.

Belongs to the class-II aminoacyl-tRNA synthetase family. Type 1 subfamily. As to quaternary structure, homodimer.

It localises to the cytoplasm. The enzyme catalyses tRNA(Asx) + L-aspartate + ATP = L-aspartyl-tRNA(Asx) + AMP + diphosphate. In terms of biological role, aspartyl-tRNA synthetase with relaxed tRNA specificity since it is able to aspartylate not only its cognate tRNA(Asp) but also tRNA(Asn). Reaction proceeds in two steps: L-aspartate is first activated by ATP to form Asp-AMP and then transferred to the acceptor end of tRNA(Asp/Asn). The sequence is that of Aspartate--tRNA(Asp/Asn) ligase from Desulfosudis oleivorans (strain DSM 6200 / JCM 39069 / Hxd3) (Desulfococcus oleovorans).